Consider the following 244-residue polypeptide: Small ribosomal subunit protein uS3 (244 aa).

One can recognise a KH type-2 domain in the interval 39–107 (VREMLRKKLA…PAHINVTEVR (69 aa)). Residues 213–244 (VGQEKQDDSPRNDRNDRGDRGDRPSRPAREAR) form a disordered region. Over residues 216 to 244 (EKQDDSPRNDRNDRGDRGDRPSRPAREAR) the composition is skewed to basic and acidic residues.

Belongs to the universal ribosomal protein uS3 family. As to quaternary structure, part of the 30S ribosomal subunit. Forms a tight complex with proteins S10 and S14.

Functionally, binds the lower part of the 30S subunit head. Binds mRNA in the 70S ribosome, positioning it for translation. This is Small ribosomal subunit protein uS3 from Xanthomonas axonopodis pv. citri (strain 306).